The primary structure comprises 129 residues: Azurin-2 (129 aa).

The Plastocyanin-like domain maps to Ala-1 to Ser-129. The cysteines at positions 3 and 26 are disulfide-linked. 4 residues coordinate Cu cation: His-46, Cys-112, His-117, and Met-121.

It is found in the periplasm. Transfers electrons from cytochrome c551 to cytochrome oxidase. This is Azurin-2 from Alcaligenes xylosoxydans xylosoxydans (Achromobacter xylosoxidans).